The sequence spans 497 residues: Actin-binding protein WASF2 (497 aa).

Disordered stretches follow at residues 173-203 (KEKR…KEEW) and 239-436 (ENVD…SDAR). Low complexity predominate over residues 252–263 (SDSASSPSPSFS). Composition is skewed to pro residues over residues 298 to 335 (SHPP…PPLP) and 343 to 403 (GTPP…PPLP). The WH2 domain maps to 435-452 (ARSDLLSAIRQGFQLRRV). The residue at position 473 (Ser473) is a Phosphoserine.

This sequence belongs to the SCAR/WAVE family. In terms of assembly, binds actin and the Arp2/3 complex. Interacts with BAIAP2. Component of the WAVE2 complex composed of ABI1, CYFIP1/SRA1, NCKAP1/NAP1 (NCKAP1l/HEM1 in hematopoietic cells) and WASF2/WAVE2. Directly interacts with BRK1. Interacts with human cytomegalovirus protein UL135. Interacts with FNBP1L (via the SH3 domain).

Its subcellular location is the cytoplasm. The protein localises to the cytoskeleton. It is found in the cell projection. The protein resides in the lamellipodium. It localises to the basolateral cell membrane. Downstream effector molecule involved in the transmission of signals from tyrosine kinase receptors and small GTPases to the actin cytoskeleton. Promotes formation of actin filaments. Part of the WAVE complex that regulates lamellipodia formation. The WAVE complex regulates actin filament reorganization via its interaction with the Arp2/3 complex. The sequence is that of Actin-binding protein WASF2 from Mus musculus (Mouse).